The following is a 175-amino-acid chain: Putative metal-dependent hydrolase BPUM_0784 (175 aa).

3 residues coordinate Zn(2+): His-65, His-157, and His-161.

It belongs to the metal hydrolase YfiT family. As to quaternary structure, homodimer. Zn(2+) serves as cofactor.

It is found in the cytoplasm. Its function is as follows. Possible metal-dependent hydrolase. This chain is Putative metal-dependent hydrolase BPUM_0784, found in Bacillus pumilus (strain SAFR-032).